The primary structure comprises 62 residues: Small ribosomal subunit protein eS27 (62 aa).

Zn(2+) contacts are provided by Cys-17, Cys-20, Cys-36, and Cys-39. The C4-type zinc finger occupies Cys-17–Cys-39.

This sequence belongs to the eukaryotic ribosomal protein eS27 family. As to quaternary structure, part of the 30S ribosomal subunit. Requires Zn(2+) as cofactor.

The chain is Small ribosomal subunit protein eS27 from Methanosarcina barkeri (strain Fusaro / DSM 804).